The following is a 286-amino-acid chain: Myb family transcription factor PHL7 (286 aa).

Positions 12 to 72 (HASKQRLRWT…HLQKYRLAKY (61 aa)) constitute an HTH myb-type domain. A DNA-binding region (H-T-H motif) is located at residues 43–68 (PKGVLRVMGVQGLTIYHVKSHLQKYR). Positions 74 to 97 (PDSSSEGKKTDKKESGDMLSGLDG) are disordered. Over residues 78–89 (SEGKKTDKKESG) the composition is skewed to basic and acidic residues. Residues 104 to 124 (TEALKLQMEVQKRLHEQLEVQ) adopt a coiled-coil conformation. The LHEQLE signature appears at 117–122 (LHEQLE). A disordered region spans residues 152-227 (LGEPSAPVTG…TGEERLSKKP (76 aa)).

Belongs to the MYB-CC family.

The protein localises to the nucleus. This chain is Myb family transcription factor PHL7, found in Arabidopsis thaliana (Mouse-ear cress).